The sequence spans 197 residues: Imidazoleglycerol-phosphate dehydratase (197 aa).

Belongs to the imidazoleglycerol-phosphate dehydratase family.

It localises to the cytoplasm. The catalysed reaction is D-erythro-1-(imidazol-4-yl)glycerol 3-phosphate = 3-(imidazol-4-yl)-2-oxopropyl phosphate + H2O. It participates in amino-acid biosynthesis; L-histidine biosynthesis; L-histidine from 5-phospho-alpha-D-ribose 1-diphosphate: step 6/9. The polypeptide is Imidazoleglycerol-phosphate dehydratase (Stutzerimonas stutzeri (strain A1501) (Pseudomonas stutzeri)).